The sequence spans 503 residues: Glycerol kinase (503 aa).

ADP is bound at residue Thr-14. Thr-14, Thr-15, and Ser-16 together coordinate ATP. Thr-14 is a sn-glycerol 3-phosphate binding site. Arg-18 provides a ligand contact to ADP. Sn-glycerol 3-phosphate contacts are provided by Arg-84, Glu-85, Tyr-136, and Asp-246. Arg-84, Glu-85, Tyr-136, Asp-246, and Gln-247 together coordinate glycerol. ADP-binding residues include Thr-268 and Gly-311. ATP-binding residues include Thr-268, Gly-311, Gln-315, and Gly-412. ADP is bound by residues Gly-412 and Asn-416.

Belongs to the FGGY kinase family.

It catalyses the reaction glycerol + ATP = sn-glycerol 3-phosphate + ADP + H(+). The protein operates within polyol metabolism; glycerol degradation via glycerol kinase pathway; sn-glycerol 3-phosphate from glycerol: step 1/1. Inhibited by fructose 1,6-bisphosphate (FBP). Its function is as follows. Key enzyme in the regulation of glycerol uptake and metabolism. Catalyzes the phosphorylation of glycerol to yield sn-glycerol 3-phosphate. This chain is Glycerol kinase, found in Haemophilus influenzae (strain PittEE).